The following is a 789-amino-acid chain: Isoamylase SU1, chloroplastic (789 aa).

Residues 1-44 (MAQQLPCVSSPRPLLAVPAGRWRAGVRGRPNVAGLGRGRLSLHA) constitute a chloroplast transit peptide. The active-site Nucleophile is D417. The active-site Proton donor is E473.

The protein belongs to the glycosyl hydrolase 13 family.

The protein resides in the plastid. The protein localises to the chloroplast. It carries out the reaction Hydrolysis of (1-&gt;6)-alpha-D-glucosidic branch linkages in glycogen, amylopectin and their beta-limit dextrins.. The protein operates within glycan biosynthesis; starch biosynthesis. Its function is as follows. Isoamylase starch-debranching enzyme involved in amylopectin biosynthesis in endosperm. Functions by removing excess branches or improper branches that interfere with the formation of double helices of the cluster chains of amylopectin and crystallization of starch. In Zea mays (Maize), this protein is Isoamylase SU1, chloroplastic.